Reading from the N-terminus, the 556-residue chain is MDKRHDPSRRIIAPHGSQLSCKSWLTEAPMRMLMNNLHPDVAERPEDLVVYGGIGRAARDWDCYDKIIEVLKRLEDDETLMVQSGKPVGVFRTHADAPRVLIANSNLVPHWANWEHFNELDKQGLAMYGQMTAGSWIYIGTQGIVQGTYETFVAVAKQHFGGVAAGKWILTGGLGGMGGAQTLAGTMAGFSVLACEVDETRIDFRLRTRYVDKKATSLDEALAMINDANASGKPVSVGLLANAADVFAELVKRGITPDVVTDQTSAHDPLNGYLPQGWTMAQAADMRKTDEAAVVKAAKASMAVQVQAMLDLQAAGAATLDYGNNIRQMAFETGVKNAFDFPGFVPAYIRPLFCEGIGPFRWVALSGDPEDIYKTDAKVKELIPDNPHLHNWLDMARERIAFQGLPARICWVGLKDRARLAQAFNEMVKNGELSAPIVIGRDHLDSGSVASPNRETESMMDGSDAVSDWPLLNALLNTASGATWVSLHHGGGVGMGFSQHSGVVIVCDGTEAAAKRVGRVLWNDPATGVMRHADAGYEIAKNCAKEQGLDLPMLKD.

Residues 52–53 (GG), Q130, 176–178 (GMG), E196, R201, 242–243 (NA), 263–267 (QTSAH), 273–274 (YL), and Y322 contribute to the NAD(+) site. C410 is a catalytic residue. G492 is an NAD(+) binding site.

The protein belongs to the urocanase family. Requires NAD(+) as cofactor.

The protein resides in the cytoplasm. It catalyses the reaction 4-imidazolone-5-propanoate = trans-urocanate + H2O. It functions in the pathway amino-acid degradation; L-histidine degradation into L-glutamate; N-formimidoyl-L-glutamate from L-histidine: step 2/3. In terms of biological role, catalyzes the conversion of urocanate to 4-imidazolone-5-propionate. In Shewanella sp. (strain MR-7), this protein is Urocanate hydratase.